We begin with the raw amino-acid sequence, 670 residues long: Protein HBS1 (670 aa).

2 disordered regions span residues 60 to 88 (KDIQ…ESFQ) and 164 to 202 (KTVS…VSGR). Acidic residues predominate over residues 63–75 (QEEEADEDEDEDA). Residues 189–200 (PSPKVPSSPVVS) are compositionally biased toward low complexity. The tr-type G domain occupies 245–468 (KSHIHMIVIG…DVIENFKIPE (224 aa)). A G1 region spans residues 254-261 (GHVDAGKS). GTP is bound at residue 254–261 (GHVDAGKS). Positions 310–314 (GITMD) are G2. Positions 331–334 (DAPG) are G3. Residues 393–396 (NKLD) and 432–434 (SGL) contribute to the GTP site. The tract at residues 393-396 (NKLD) is G4. Residues 432 to 434 (SGL) are G5.

This sequence belongs to the TRAFAC class translation factor GTPase superfamily. Classic translation factor GTPase family. As to quaternary structure, component of the Pelota-HBS1L complex, also named Dom34-Hbs1 complex, composed of pelo and HBS1. Expressed in ovaries (at protein level).

It is found in the cytoplasm. It catalyses the reaction GTP + H2O = GDP + phosphate + H(+). GTPase component of the Pelota-HBS1L complex, a complex that recognizes stalled ribosomes and triggers the No-Go Decay (NGD) pathway. The Pelota-HBS1L complex recognizes ribosomes stalled at the 3' end of an mRNA and engages stalled ribosomes by destabilizing mRNA in the mRNA channel. Following ribosome-binding, the Pelota-HBS1L complex promotes recruitment of pix, which drives the disassembly of stalled ribosomes, followed by degradation of damaged mRNAs as part of the NGD pathway. Together with pelo, required for transposon silencing in the ovary and testis. Together with pelo, promotes meiosis and spermatid individualization during spermatogenesis. The protein is Protein HBS1 of Drosophila melanogaster (Fruit fly).